Reading from the N-terminus, the 383-residue chain is Lipid-A-disaccharide synthase (383 aa).

Belongs to the LpxB family.

The catalysed reaction is a lipid X + a UDP-2-N,3-O-bis[(3R)-3-hydroxyacyl]-alpha-D-glucosamine = a lipid A disaccharide + UDP + H(+). Its pathway is bacterial outer membrane biogenesis; LPS lipid A biosynthesis. Functionally, condensation of UDP-2,3-diacylglucosamine and 2,3-diacylglucosamine-1-phosphate to form lipid A disaccharide, a precursor of lipid A, a phosphorylated glycolipid that anchors the lipopolysaccharide to the outer membrane of the cell. In Trichlorobacter lovleyi (strain ATCC BAA-1151 / DSM 17278 / SZ) (Geobacter lovleyi), this protein is Lipid-A-disaccharide synthase.